Here is a 591-residue protein sequence, read N- to C-terminus: 2-succinyl-5-enolpyruvyl-6-hydroxy-3-cyclohexene-1-carboxylate synthase (591 aa).

This sequence belongs to the TPP enzyme family. MenD subfamily. In terms of assembly, homodimer. It depends on Mg(2+) as a cofactor. Mn(2+) serves as cofactor. Thiamine diphosphate is required as a cofactor.

The catalysed reaction is isochorismate + 2-oxoglutarate + H(+) = 5-enolpyruvoyl-6-hydroxy-2-succinyl-cyclohex-3-ene-1-carboxylate + CO2. It participates in quinol/quinone metabolism; 1,4-dihydroxy-2-naphthoate biosynthesis; 1,4-dihydroxy-2-naphthoate from chorismate: step 2/7. It functions in the pathway cofactor biosynthesis; phylloquinone biosynthesis. Catalyzes the thiamine diphosphate-dependent decarboxylation of 2-oxoglutarate and the subsequent addition of the resulting succinic semialdehyde-thiamine pyrophosphate anion to isochorismate to yield 2-succinyl-5-enolpyruvyl-6-hydroxy-3-cyclohexene-1-carboxylate (SEPHCHC). The protein is 2-succinyl-5-enolpyruvyl-6-hydroxy-3-cyclohexene-1-carboxylate synthase of Rippkaea orientalis (strain PCC 8801 / RF-1) (Cyanothece sp. (strain PCC 8801)).